The chain runs to 1167 residues: Tight junction protein 2 (1167 aa).

Positions 10 to 97 constitute a PDZ 1 domain; that stretch reads TVTLQKDSKR…IAAIVVKRPR (88 aa). Phosphoserine is present on residues Ser-107, Ser-127, Ser-130, Ser-140, Ser-145, Ser-147, Ser-173, Ser-194, Ser-205, and Ser-239. Residues 129–195 form a disordered region; that stretch reads RSGYSERSRH…SRERSRGRSL (67 aa). Positions 225-286 are disordered; it reads SYHEAYEPDY…KGQHDPDRPI (62 aa). Basic and acidic residues predominate over residues 242 to 262; sequence YDRRAHPETRYERSRSREHLR. The 79-residue stretch at 287 to 365 folds into the PDZ 2 domain; it reads GVLLTKSKAN…KLQLVVLRDS (79 aa). Phosphoserine is present on residues Ser-305, Ser-378, Ser-380, Ser-386, Ser-395, Ser-404, Ser-410, and Ser-411. Positions 381-485 are disordered; that stretch reads EVEDISEIES…LRPSPEDEAI (105 aa). The segment covering 395-426 has biased composition (basic and acidic residues); that stretch reads SPEERRQQYSDQDYHSSTEKLKERPSSREETS. Thr-435 is modified (phosphothreonine). Ser-479 carries the post-translational modification Phosphoserine. Residues 489–570 form the PDZ 3 domain; that stretch reads NTKMVRFKKG…GETVTILAQS (82 aa). Tyr-554 bears the Phosphotyrosine mark. Residues 584 to 649 form the SH3 domain; it reads GDSFFIRSHF…PNKSRAEQMA (66 aa). The 199-residue stretch at 660–858 folds into the Guanylate kinase-like domain; the sequence is GDRADFWRMR…WFGSLKDSIQ (199 aa). Phosphoserine occurs at positions 684 and 884. The residue at position 887 (Thr-887) is a Phosphothreonine. Residues Ser-895 and Ser-902 each carry the phosphoserine modification. Disordered regions lie at residues 904-1055 and 1095-1167; these read FEDT…PRSV and YAVP…DTEL. A phosphothreonine mark is found at Thr-907 and Thr-915. The segment covering 938–949 has biased composition (basic and acidic residues); that stretch reads VQHEENIRKSSP. Phosphoserine is present on residues Ser-948, Ser-960, Ser-968, Ser-988, and Ser-1044. Positions 976–990 are enriched in basic and acidic residues; sequence EPPKARSQNREDSFD. The segment covering 1037-1049 has biased composition (acidic residues); it reads ESEEVGESTEEQE. Tyr-1095 carries the post-translational modification Phosphotyrosine. A phosphoserine mark is found at Ser-1124 and Ser-1136. Positions 1165-1167 are interaction with SCRIB; it reads TEL.

Belongs to the MAGUK family. As to quaternary structure, homodimer. Interacts (via PDZ2 domain) with TJP1/ZO1 (via PDZ2 domain). Interacts with UBN1. Interacts with SCRIB. Interacts with OCLN. Interacts with SAFB in the nucleus. Interacts with USP53 (via the C-terminal region). Interacts with claudins, including CLDN1, CLDN2, CLDN3, CLDN5 and CLDN7. Interacts with CLDN18. Interacts (via N-terminus) with CTNNA1.

It is found in the cell junction. The protein resides in the adherens junction. Its subcellular location is the cell membrane. It localises to the nucleus. The protein localises to the tight junction. Functionally, plays a role in tight junctions and adherens junctions. Acts as a positive regulator of RANKL-induced osteoclast differentiation, potentially via mediating downstream transcriptional activity. In Mus musculus (Mouse), this protein is Tight junction protein 2.